Reading from the N-terminus, the 328-residue chain is Lipoyl synthase (328 aa).

[4Fe-4S] cluster contacts are provided by cysteine 56, cysteine 61, cysteine 67, cysteine 82, cysteine 86, cysteine 89, and serine 293. Positions 68-282 (WEDREATFLI…ERVGAELGFS (215 aa)) constitute a Radical SAM core domain.

This sequence belongs to the radical SAM superfamily. Lipoyl synthase family. Requires [4Fe-4S] cluster as cofactor.

The protein resides in the cytoplasm. The catalysed reaction is [[Fe-S] cluster scaffold protein carrying a second [4Fe-4S](2+) cluster] + N(6)-octanoyl-L-lysyl-[protein] + 2 oxidized [2Fe-2S]-[ferredoxin] + 2 S-adenosyl-L-methionine + 4 H(+) = [[Fe-S] cluster scaffold protein] + N(6)-[(R)-dihydrolipoyl]-L-lysyl-[protein] + 4 Fe(3+) + 2 hydrogen sulfide + 2 5'-deoxyadenosine + 2 L-methionine + 2 reduced [2Fe-2S]-[ferredoxin]. It participates in protein modification; protein lipoylation via endogenous pathway; protein N(6)-(lipoyl)lysine from octanoyl-[acyl-carrier-protein]: step 2/2. In terms of biological role, catalyzes the radical-mediated insertion of two sulfur atoms into the C-6 and C-8 positions of the octanoyl moiety bound to the lipoyl domains of lipoate-dependent enzymes, thereby converting the octanoylated domains into lipoylated derivatives. The sequence is that of Lipoyl synthase from Frankia alni (strain DSM 45986 / CECT 9034 / ACN14a).